A 430-amino-acid polypeptide reads, in one-letter code: Probable ribosomal RNA small subunit methyltransferase B (430 aa).

Residues 246–252 (CAAPGSK), D270, D299, and D318 each bind S-adenosyl-L-methionine. The active-site Nucleophile is C371.

Belongs to the class I-like SAM-binding methyltransferase superfamily. RsmB/NOP family.

The protein resides in the cytoplasm. It carries out the reaction cytidine(967) in 16S rRNA + S-adenosyl-L-methionine = 5-methylcytidine(967) in 16S rRNA + S-adenosyl-L-homocysteine + H(+). Specifically methylates the cytosine at position 967 (m5C967) of 16S rRNA. The sequence is that of Probable ribosomal RNA small subunit methyltransferase B from Coxiella burnetii (strain RSA 493 / Nine Mile phase I).